The sequence spans 479 residues: Cysteine protease effector 1 (479 aa).

The protein is Cysteine protease effector 1 of Escherichia coli O1:K1:H7 (strain ATCC 11775 / DSM 30083 / JCM 1649 / NBRC 102203 / NCTC 9001 / U5/41).